The primary structure comprises 509 residues: Ribonuclease Y (509 aa).

Residues 5-25 (IAGVSGIAGAAVGAGACYLWL) form a helical membrane-spanning segment. The KH domain occupies 199–265 (LINLVNLPSD…TRVIEILIED (67 aa)). The 94-residue stretch at 325–418 (ALAHTLEVAK…VCAADTLSAA (94 aa)) folds into the HD domain.

This sequence belongs to the RNase Y family.

It is found in the cell membrane. Functionally, endoribonuclease that initiates mRNA decay. This chain is Ribonuclease Y, found in Sulfurovum sp. (strain NBC37-1).